The primary structure comprises 252 residues: Small ribosomal subunit protein uS3 (252 aa).

A KH type-2 domain is found at 39–110 (IRKALMKELK…EVKINVVEIK (72 aa)). A disordered region spans residues 218-252 (TSDEKPKFEKRDFNRSNNNRRDQAPKSHPVAKEAK). Residues 219–252 (SDEKPKFEKRDFNRSNNNRRDQAPKSHPVAKEAK) show a composition bias toward basic and acidic residues.

It belongs to the universal ribosomal protein uS3 family. Part of the 30S ribosomal subunit. Forms a tight complex with proteins S10 and S14.

In terms of biological role, binds the lower part of the 30S subunit head. Binds mRNA in the 70S ribosome, positioning it for translation. This Spiroplasma citri protein is Small ribosomal subunit protein uS3.